Reading from the N-terminus, the 123-residue chain is Large ribosomal subunit protein bL17 (123 aa).

The protein belongs to the bacterial ribosomal protein bL17 family. As to quaternary structure, part of the 50S ribosomal subunit. Contacts protein L32.

The chain is Large ribosomal subunit protein bL17 from Exiguobacterium sibiricum (strain DSM 17290 / CCUG 55495 / CIP 109462 / JCM 13490 / 255-15).